Consider the following 585-residue polypeptide: Bestrophin-1 (585 aa).

At 1–31 (MTITYTSQVANARLGSFSRLLLCWRGSIYKL) the chain is on the cytoplasmic side. A10 serves as a coordination point for Ca(2+). A helical transmembrane segment spans residues 32–51 (LYGEFLIFLLCYYIIRFIYR). The Extracellular segment spans residues 52–60 (LALTEEQQL). The helical transmembrane segment at 61–82 (MFEKLTLYCDSYIQLIPISFVL) threads the bilayer. Over 83–237 (GFYVTLVVTR…DWISIPLVYT (155 aa)) the chain is Cytoplasmic. The helical transmembrane segment at 238–255 (QVVTVAVYSFFLTCLVGR) threads the bilayer. Over 256 to 274 (QFLNPAKAYPGHELDLVVP) the chain is Extracellular. The chain crosses the membrane as a helical span at residues 275–288 (VFTFLQFFFYVGWL). Residues 289 to 585 (KVAEQLINPF…ALENRDEAHS (297 aa)) are Cytoplasmic-facing. Ca(2+)-binding residues include Q293, N296, D301, and D304. The segment at 346-379 (PYTAASAQFRRASFMGSTFNISLNKEEMEFQPNQ) is auto-inhibitory segment.

The protein belongs to the anion channel-forming bestrophin (TC 1.A.46) family. Calcium-sensitive chloride channel subfamily. As to quaternary structure, interacts with YWHAG; this interaction promotes the ligand-gated L-glutamate channel activity leading to the positive regulation of NMDA glutamate receptor activity through the L-glutamate secretion. In terms of tissue distribution, predominantly expressed in the basolateral membrane of the retinal pigment epithelium.

The protein localises to the cell membrane. It is found in the basolateral cell membrane. The catalysed reaction is chloride(in) = chloride(out). It catalyses the reaction hydrogencarbonate(in) = hydrogencarbonate(out). It carries out the reaction 4-aminobutanoate(in) = 4-aminobutanoate(out). The enzyme catalyses L-glutamate(out) = L-glutamate(in). Its activity is regulated as follows. Inactivated by sulfhydryl-reactive agents. In terms of biological role, ligand-gated anion channel that allows the movement of anions across cell membranes when activated by calcium (Ca2+). Allows the movement of chloride and hydrogencarbonate. Found in a partially open conformation leading to significantly smaller chloride movement. Upon F2R/PAR-1 activation, the sequestered calcium is released into the cytosol of astrocytes, leading to the (Ca2+)-dependent release of L-glutamate into the synaptic cleft that targets the neuronal postsynaptic GRIN2A/NMDAR receptor resulting in the synaptic plasticity regulation. Upon activation of the norepinephrine-alpha-1 adrenergic receptor signaling pathway, transports as well D-serine than L-glutamate in a (Ca2+)-dependent manner, leading to activation of adjacent NMDAR receptors and therefore regulates the heterosynaptic long-term depression and metaplasticity during initial memory acquisition. Releases the 4-aminobutanoate neurotransmitter in a (Ca2+)-dependent manner, and participates in its tonic release from cerebellar glial cells. This chain is Bestrophin-1, found in Homo sapiens (Human).